The sequence spans 282 residues: 3-oxoadipate CoA-transferase subunit A (282 aa).

This sequence belongs to the 3-oxoacid CoA-transferase subunit A family. Heterotetramer composed of 2 A and 2 B subunits.

It carries out the reaction 3-oxoadipate + succinyl-CoA = 3-oxoadipyl-CoA + succinate. Its pathway is aromatic compound metabolism; beta-ketoadipate pathway; acetyl-CoA and succinyl-CoA from 3-oxoadipate: step 1/2. In terms of biological role, catalyzes the CoA transfer from succinate to 3-oxoadipate (beta-ketoadipate). The chain is 3-oxoadipate CoA-transferase subunit A (catI) from Pseudomonas knackmussii (strain DSM 6978 / CCUG 54928 / LMG 23759 / B13).